Reading from the N-terminus, the 168-residue chain is NADH-quinone oxidoreductase subunit I (168 aa).

4Fe-4S ferredoxin-type domains are found at residues 58–88 (LRRY…IEAG) and 99–128 (VRYD…EGPN). Positions 68, 71, 74, 78, 108, 111, 114, and 118 each coordinate [4Fe-4S] cluster.

This sequence belongs to the complex I 23 kDa subunit family. In terms of assembly, NDH-1 is composed of 14 different subunits. Subunits NuoA, H, J, K, L, M, N constitute the membrane sector of the complex. Requires [4Fe-4S] cluster as cofactor.

Its subcellular location is the cell inner membrane. The enzyme catalyses a quinone + NADH + 5 H(+)(in) = a quinol + NAD(+) + 4 H(+)(out). Its function is as follows. NDH-1 shuttles electrons from NADH, via FMN and iron-sulfur (Fe-S) centers, to quinones in the respiratory chain. The immediate electron acceptor for the enzyme in this species is believed to be ubiquinone. Couples the redox reaction to proton translocation (for every two electrons transferred, four hydrogen ions are translocated across the cytoplasmic membrane), and thus conserves the redox energy in a proton gradient. The sequence is that of NADH-quinone oxidoreductase subunit I from Bradyrhizobium diazoefficiens (strain JCM 10833 / BCRC 13528 / IAM 13628 / NBRC 14792 / USDA 110).